Consider the following 1150-residue polypeptide: Protogenin (1150 aa).

An N-terminal signal peptide occupies residues 1–35 (MAPPLRPLARLRPPGMLLRALLLLLLLSPLPGVWC). 4 consecutive Ig-like domains span residues 36–130 (FSEL…AHLA), 135–222 (SAFE…ASLT), 235–322 (PTII…ATLT), and 327–411 (PSFV…ARLT). The Extracellular portion of the chain corresponds to 36–949 (FSELSFVKEP…YYHLDQKSMT (914 aa)). 4 disulfides stabilise this stretch: Cys60-Cys113, Cys156-Cys205, Cys256-Cys304, and Cys348-Cys395. Residue Asn90 is glycosylated (N-linked (GlcNAc...) asparagine). 5 consecutive Fibronectin type-III domains span residues 421-515 (APYN…TLED), 517-613 (PLRP…TPKA), 618-717 (APKS…VRDR), 724-817 (PPHH…TLPE), and 822-917 (PPVG…VLPK). Asn488 carries an N-linked (GlcNAc...) asparagine glycan. Asn630 carries an N-linked (GlcNAc...) asparagine glycan. A helical membrane pass occupies residues 950 to 970 (GIAVGVGIALTCILICVLILI). Residues 971 to 1150 (YRSKARKSSA…SVISTTPPNL (180 aa)) are Cytoplasmic-facing. Disordered stretches follow at residues 981-1002 (SKTAQNGTQQLPRTSASLASGN) and 1086-1150 (ISDE…PPNL). Polar residues-rich tracts occupy residues 983 to 1000 (TAQNGTQQLPRTSASLAS) and 1092 to 1102 (PSSPGQTTSFS). Over residues 1110–1138 (DTEHSANSEGSHETGDSGRFSHESNDEIH) the composition is skewed to basic and acidic residues. A compositionally biased stretch (polar residues) spans 1141 to 1150 (SVISTTPPNL).

Belongs to the immunoglobulin superfamily. DCC family.

The protein resides in the membrane. Functionally, may play a role in anteroposterior axis elongation. The protein is Protogenin of Homo sapiens (Human).